A 2371-amino-acid chain; its full sequence is Highly reducing polyketide synthase ntnH (2371 aa).

The region spanning 10-429 (PSPIAIVGIG…GANAHVILEG (420 aa)) is the Ketosynthase family 3 (KS3) domain. Residues C180, H316, and H352 each act as for beta-ketoacyl synthase activity in the active site. The segment at 528–796 (FIFTGQGAQW…NSCLSRGADA (269 aa)) is malonyl-CoA:ACP transacylase (MAT) domain. Residues 858-986 (HELLGARVIG…GKVHPGNAST (129 aa)) are N-terminal hotdog fold. Residues 858-1142 (HELLGARVIG…GIRFRILENN (285 aa)) form a dehydratase (DH) domain region. Residues 858-1145 (HELLGARVIG…FRILENNRSK (288 aa)) form the PKS/mFAS DH domain. The active-site Proton acceptor; for dehydratase activity is H890. The segment at 1001–1145 (VRGVISAKWY…FRILENNRSK (145 aa)) is C-terminal hotdog fold. The Proton donor; for dehydratase activity role is filled by D1059. The interval 1309 to 1456 (FFQLLGHNKK…FENVTAIMDQ (148 aa)) is methyltransferase (CMet) domain. The interval 1669-1968 (GLLSSLQWQG…GHRPIGAICI (300 aa)) is enoyl reductase (ER) (ER) domain. The interval 1993 to 2167 (SYVLIGGLGG…ASVIDLGVME (175 aa)) is ketoreductase (KR) domain. In terms of domain architecture, Carrier spans 2280 to 2362 (EDETAVAEFL…DLGKLARSRI (83 aa)). S2322 bears the O-(pantetheine 4'-phosphoryl)serine mark.

The protein operates within secondary metabolite biosynthesis; terpenoid biosynthesis. In terms of biological role, highly reducing polyketide synthase; part of the gene cluster that mediates the biosynthesis of the meroterpenoids nectripenoids A and B, as well as cochliquninone D and isocochliquninone E. The pathway probably begins with the HR-PKS ntnH that catalyzes two chain-extension steps to form a reduced triketide, which then primes the SAT domain in the NR-PKS ntnG to initiate three more cycles of extension to give a linear hexaketide corresponding to the polyketide part of nectripenoids. The FAD-dependent monooxygenase ntnJ then performs an oxidative decarboxylation at C11 of the ntnH/ntnG product, via an electrophilic aromatic hydroxylation with concomitant ipso-decarboxylation. The membrane-bound polyprenyl transferase ntnF then introduces a farnesyl group before the FAD-dependent monooxygenase ntnK functions as the first epoxidase on terminal C12'-C13' olefin, followed by a second epoxidation on C7'-C8' catalyzed by ntnA. The terpene cyclase/mutase ntnI then initiates the sequential tricyclic ring formation through protonation of the terminal epoxide and catalyzes the regioselective and stereoselective 6/6/6-tricyclic ring formation. The cytochrome P450 monooxygenase ntnM may then hydroxylate C1'. The protein is Highly reducing polyketide synthase ntnH of Nectria sp.